The following is a 62-amino-acid chain: Large ribosomal subunit protein eL37 (62 aa).

Zn(2+)-binding residues include cysteine 20, cysteine 23, cysteine 35, and cysteine 38. The C4-type zinc-finger motif lies at 20 to 38 (CRRCGRRAYHVRKGYCAAC).

Belongs to the eukaryotic ribosomal protein eL37 family. Zn(2+) is required as a cofactor.

Binds to the 23S rRNA. This Methanopyrus kandleri (strain AV19 / DSM 6324 / JCM 9639 / NBRC 100938) protein is Large ribosomal subunit protein eL37.